The sequence spans 377 residues: Cytochrome c peroxidase, mitochondrial (377 aa).

A mitochondrion-targeting transit peptide spans 1-17 (MSFRAPNLIRSAAGRRA). Residue His138 is the Proton acceptor of the active site. Residue His261 coordinates heme b. Catalysis depends on Trp277, which acts as the Tryptophan radical intermediate.

The protein belongs to the peroxidase family. Cytochrome c peroxidase subfamily. As to quaternary structure, forms a one-to-one complex with cytochrome c. Requires heme b as cofactor.

Its subcellular location is the mitochondrion matrix. It is found in the mitochondrion intermembrane space. The enzyme catalyses 2 Fe(II)-[cytochrome c] + H2O2 + 2 H(+) = 2 Fe(III)-[cytochrome c] + 2 H2O. Destroys radicals which are normally produced within the cells and which are toxic to biological systems. The chain is Cytochrome c peroxidase, mitochondrial (CCP1) from Cryptococcus neoformans var. neoformans serotype D (strain JEC21 / ATCC MYA-565) (Filobasidiella neoformans).